The sequence spans 349 residues: S-adenosylmethionine:tRNA ribosyltransferase-isomerase (349 aa).

The protein belongs to the QueA family. As to quaternary structure, monomer.

Its subcellular location is the cytoplasm. The catalysed reaction is 7-aminomethyl-7-carbaguanosine(34) in tRNA + S-adenosyl-L-methionine = epoxyqueuosine(34) in tRNA + adenine + L-methionine + 2 H(+). It participates in tRNA modification; tRNA-queuosine biosynthesis. Transfers and isomerizes the ribose moiety from AdoMet to the 7-aminomethyl group of 7-deazaguanine (preQ1-tRNA) to give epoxyqueuosine (oQ-tRNA). The sequence is that of S-adenosylmethionine:tRNA ribosyltransferase-isomerase from Ruegeria pomeroyi (strain ATCC 700808 / DSM 15171 / DSS-3) (Silicibacter pomeroyi).